Here is a 49-residue protein sequence, read N- to C-terminus: Protein 19.5 (49 aa).

The signal sequence occupies residues Met-1–Ala-23.

The chain is Protein 19.5 from Escherichia phage T7 (Bacteriophage T7).